Consider the following 853-residue polypeptide: MPLSEPRQIKKPRLSLSCIVCRRRKVRCGREQPECANCVRMKENCVYRTMVRDESTGRVRPVSPQDKDSRVSTSDARPDLPWPHWGRDTNAPYPDKPSRPPSRPQVSANASPSPQRQEPYPTVPSWEEAIQLPSYRDANAPQINGSSTTTRDPSPAPSTSLFPTPSDHPCRDYLSIRRGGRVRYVGQTFWGFVAGKESLSDDFFDENRHAHPDLPLPHISSMGMFNLLRSLPTKPVSDTLLETFFLAVWPLVPLLHPPSLQADYDEFWEWCRNSENALPSDKLRDDPTLICLLFAVLYCGASAAPAATWANTNLQGLQKETTVSHLKSAYTTSLSLCQHQEHPTLNTLVSNLLTGPFLDRPFEPMRSLVNVSTTVRIAQTMGLHREGAWSALSSVDREIRRRVWWHIVWLDVQSSISTGLTPCCGNEALDAVGMVGTDHVEPSNIPAGLSPPNELVTNRQSVAMLYAIGRFQTARLQARIVAHLQSAHDPSQDGFGELITDSKELLQKIDSLIARVPTQGIPEMGYIPSRLANASPSTQPLLYKDDPSQPTVFSAWTRIMLTLLKSEMAILLQKPFLPPPDSANPQSLKSWTSMAQLCVNYLRIYLQLYQAPAFSPYAWFCCSHYGPLQCVFITLMYLHYFQHSGETTLARYCVDEVIHHCVAQYQAPDPSSTRTSPDDTDSNGGKLRMPLAIQVLVDLHERLDSSLGPEDRAPPLDLIECQARFSMSHLATKASDLRATSDQPSSDVSSTTRTHHNCETPPITTGAPPVAAGNKPVPPNSVFVAGSDSGLDMDFLATISDLEAWSSSLILESDNLLARPDDMTPDHAVITRLGSQSTASGRRGLPDGLDFPG.

A DNA-binding region (zn(2)-C6 fungal-type) is located at residues 18–45 (CIVCRRRKVRCGREQPECANCVRMKENC). 4 disordered regions span residues 54-122 (ESTG…PYPT), 138-166 (ANAPQINGSSTTTRDPSPAPSTSLFPTPS), 734-775 (ASDL…AGNK), and 833-853 (LGSQSTASGRRGLPDGLDFPG). Polar residues-rich tracts occupy residues 104–116 (PQVSANASPSPQR), 141–163 (PQINGSSTTTRDPSPAPSTSLFP), and 738–752 (RATSDQPSSDVSSTT).

It is found in the nucleus. Its function is as follows. Transcription factor that regulates the expression of the gene cluster that mediates the biosynthesis of macrophorins, isoprenoid epoxycyclohexenones containing cyclized drimane moieties. This chain is Transcription factor macR, found in Penicillium terrestre.